A 155-amino-acid chain; its full sequence is Probable Brix domain-containing ribosomal biogenesis protein (155 aa).

Residues 1 to 155 (MLLTTSRKPS…LLIRDFRVGE (155 aa)) form the Brix domain.

Its function is as follows. Probably involved in the biogenesis of the ribosome. The polypeptide is Probable Brix domain-containing ribosomal biogenesis protein (Methanothermobacter thermautotrophicus (strain ATCC 29096 / DSM 1053 / JCM 10044 / NBRC 100330 / Delta H) (Methanobacterium thermoautotrophicum)).